The chain runs to 286 residues: Phosphatidylglycerol--prolipoprotein diacylglyceryl transferase (286 aa).

A run of 7 helical transmembrane segments spans residues 29 to 49 (IHWY…VGTY), 66 to 86 (LVFY…VFFY), 101 to 121 (VWEG…AMML), 130 to 150 (FLDL…LGRI), 181 to 201 (PSQL…LFWF), 209 to 229 (AAVA…VEFV), and 250 to 270 (LSLP…RHPA). Residue arginine 149 coordinates a 1,2-diacyl-sn-glycero-3-phospho-(1'-sn-glycerol).

This sequence belongs to the Lgt family.

It localises to the cell inner membrane. The catalysed reaction is L-cysteinyl-[prolipoprotein] + a 1,2-diacyl-sn-glycero-3-phospho-(1'-sn-glycerol) = an S-1,2-diacyl-sn-glyceryl-L-cysteinyl-[prolipoprotein] + sn-glycerol 1-phosphate + H(+). It functions in the pathway protein modification; lipoprotein biosynthesis (diacylglyceryl transfer). Functionally, catalyzes the transfer of the diacylglyceryl group from phosphatidylglycerol to the sulfhydryl group of the N-terminal cysteine of a prolipoprotein, the first step in the formation of mature lipoproteins. This is Phosphatidylglycerol--prolipoprotein diacylglyceryl transferase from Teredinibacter turnerae (strain ATCC 39867 / T7901).